Consider the following 75-residue polypeptide: uncharacterized protein (75 aa).

Residues 1 to 19 (MQCVCLCVFVLLLAGCVTS) form the signal peptide.

As to expression, nacreous layer of shell (at protein level).

It is found in the secreted. This is an uncharacterized protein from Margaritifera margaritifera (Freshwater pearl mussel).